A 97-amino-acid polypeptide reads, in one-letter code: Nuclear protein 2 (97 aa).

Residues 76-97 form a disordered region; the sequence is LLNGQRKRRQRQLHPKMRTRLT. Residues 80 to 97 are compositionally biased toward basic residues; the sequence is QRKRRQRQLHPKMRTRLT.

This sequence belongs to the NUPR family.

It is found in the nucleus. Functionally, acts as a transcriptional repressor by inhibiting gene expression at the NUPR1 promoter in a p53/TP53-dependent manner in cancer cells. Involved in the G1 cell cycle arrest, and in a decrease in cell viability and cell proliferation. Plays a role as a negative regulator of the protumoral factor NUPR1. This chain is Nuclear protein 2, found in Homo sapiens (Human).